An 826-amino-acid chain; its full sequence is Ribonucleoside-diphosphate reductase large subunit (826 aa).

Substrate-binding positions include threonine 171, 186 to 187, glycine 217, 387 to 391, and 594 to 598; these read SC, NLCAE, and PTSGC. The cysteines at positions 187 and 403 are disulfide-linked. Asparagine 387 (proton acceptor) is an active-site residue. Cysteine 389 acts as the Cysteine radical intermediate in catalysis. The active-site Proton acceptor is glutamate 391.

Belongs to the ribonucleoside diphosphate reductase large chain family. Heterotetramer composed of a homodimer of the large subunit (R1) and a homodimer of the small subunit (R2). Larger multisubunit protein complex are also active, composed of (R1)n(R2)n.

It catalyses the reaction a 2'-deoxyribonucleoside 5'-diphosphate + [thioredoxin]-disulfide + H2O = a ribonucleoside 5'-diphosphate + [thioredoxin]-dithiol. Ribonucleoside-diphosphate reductase holoenzyme provides the precursors necessary for viral DNA synthesis. Allows virus growth in non-dividing cells, as well as reactivation from latency in infected hosts. Catalyzes the biosynthesis of deoxyribonucleotides from the corresponding ribonucleotides. This chain is Ribonucleoside-diphosphate reductase large subunit, found in Epstein-Barr virus (strain GD1) (HHV-4).